Reading from the N-terminus, the 116-residue chain is Large ribosomal subunit protein uL22c (116 aa).

It belongs to the universal ribosomal protein uL22 family. In terms of assembly, part of the 50S ribosomal subunit.

The protein localises to the plastid. It localises to the chloroplast. This protein binds specifically to 23S rRNA. Its function is as follows. The globular domain of the protein is located near the polypeptide exit tunnel on the outside of the subunit, while an extended beta-hairpin is found that lines the wall of the exit tunnel in the center of the 70S ribosome. In Euglena gracilis, this protein is Large ribosomal subunit protein uL22c (rpl22).